A 227-amino-acid chain; its full sequence is Phosphoribosylformylglycinamidine synthase subunit PurQ (227 aa).

The Glutamine amidotransferase type-1 domain occupies 3–227 (FAVIVFPGSN…NWRESHVTAS (225 aa)). Cys-86 (nucleophile) is an active-site residue. Catalysis depends on residues His-194 and Glu-196.

As to quaternary structure, part of the FGAM synthase complex composed of 1 PurL, 1 PurQ and 2 PurS subunits.

Its subcellular location is the cytoplasm. It carries out the reaction N(2)-formyl-N(1)-(5-phospho-beta-D-ribosyl)glycinamide + L-glutamine + ATP + H2O = 2-formamido-N(1)-(5-O-phospho-beta-D-ribosyl)acetamidine + L-glutamate + ADP + phosphate + H(+). The enzyme catalyses L-glutamine + H2O = L-glutamate + NH4(+). It functions in the pathway purine metabolism; IMP biosynthesis via de novo pathway; 5-amino-1-(5-phospho-D-ribosyl)imidazole from N(2)-formyl-N(1)-(5-phospho-D-ribosyl)glycinamide: step 1/2. Functionally, part of the phosphoribosylformylglycinamidine synthase complex involved in the purines biosynthetic pathway. Catalyzes the ATP-dependent conversion of formylglycinamide ribonucleotide (FGAR) and glutamine to yield formylglycinamidine ribonucleotide (FGAM) and glutamate. The FGAM synthase complex is composed of three subunits. PurQ produces an ammonia molecule by converting glutamine to glutamate. PurL transfers the ammonia molecule to FGAR to form FGAM in an ATP-dependent manner. PurS interacts with PurQ and PurL and is thought to assist in the transfer of the ammonia molecule from PurQ to PurL. The sequence is that of Phosphoribosylformylglycinamidine synthase subunit PurQ from Shouchella clausii (strain KSM-K16) (Alkalihalobacillus clausii).